The primary structure comprises 321 residues: Putative zinc finger CCCH domain-containing protein 9 (321 aa).

2 disordered regions span residues 1–59 (MADA…PGKK) and 181–269 (REAE…NLQE). The segment covering 10–29 (EAERRSDETESRSIKEPKEK) has biased composition (basic and acidic residues). The segment at 55–83 (RPGKKDCQFYLKNGLCRYRSSCRFNHPTQ) adopts a C3H1-type zinc-finger fold. Residues 164–290 (TEWRFERERM…EARLRLEQIR (127 aa)) adopt a coiled-coil conformation. Basic and acidic residues-rich tracts occupy residues 181–224 (REAE…REAQ) and 231–244 (RQRD…REAQ).

In Arabidopsis thaliana (Mouse-ear cress), this protein is Putative zinc finger CCCH domain-containing protein 9.